Here is a 341-residue protein sequence, read N- to C-terminus: Beta-ketoacyl-[acyl-carrier-protein] synthase III 1 (341 aa).

Active-site residues include Cys113 and His249. The ACP-binding stretch occupies residues Gln250–Arg254. Residue Asn279 is part of the active site.

It belongs to the thiolase-like superfamily. FabH family. In terms of assembly, homodimer.

The protein localises to the cytoplasm. It carries out the reaction malonyl-[ACP] + acetyl-CoA + H(+) = 3-oxobutanoyl-[ACP] + CO2 + CoA. The protein operates within lipid metabolism; fatty acid biosynthesis. Its function is as follows. Catalyzes the condensation reaction of fatty acid synthesis by the addition to an acyl acceptor of two carbons from malonyl-ACP. Catalyzes the first condensation reaction which initiates fatty acid synthesis and may therefore play a role in governing the total rate of fatty acid production. Possesses both acetoacetyl-ACP synthase and acetyl transacylase activities. Its substrate specificity determines the biosynthesis of branched-chain and/or straight-chain of fatty acids. This Deinococcus radiodurans (strain ATCC 13939 / DSM 20539 / JCM 16871 / CCUG 27074 / LMG 4051 / NBRC 15346 / NCIMB 9279 / VKM B-1422 / R1) protein is Beta-ketoacyl-[acyl-carrier-protein] synthase III 1.